Consider the following 500-residue polypeptide: NAD(P)H-quinone oxidoreductase chain 4, chloroplastic (500 aa).

14 helical membrane passes run Phe4–Leu24, Tyr35–Phe55, Ile87–Val107, Leu113–Ser130, Leu134–Met154, Phe167–Leu187, Ile211–His231, His242–Val262, Ala272–Ala292, Ile305–Asp325, Gly330–Gly350, Leu386–Thr406, Ile416–Met436, and Leu462–Val482.

The protein belongs to the complex I subunit 4 family.

It is found in the plastid. Its subcellular location is the chloroplast thylakoid membrane. It catalyses the reaction a plastoquinone + NADH + (n+1) H(+)(in) = a plastoquinol + NAD(+) + n H(+)(out). It carries out the reaction a plastoquinone + NADPH + (n+1) H(+)(in) = a plastoquinol + NADP(+) + n H(+)(out). The chain is NAD(P)H-quinone oxidoreductase chain 4, chloroplastic from Aethionema cordifolium (Lebanon stonecress).